Reading from the N-terminus, the 355-residue chain is Ornithine transcarbamylase, mitochondrial (355 aa).

A mitochondrion-targeting transit peptide spans 1–35; sequence MLFINLRTLLNNAALRNGHNFVVRNFRCGQPVQDK. Lys-71 bears the N6-acetyllysine; alternate mark. Position 71 is an N6-succinyllysine; alternate (Lys-71). The residue at position 81 (Lys-81) is an N6-succinyllysine. Lys-89 carries the post-translational modification N6-acetyllysine; alternate. Lys-89 carries the N6-succinyllysine; alternate modification. Residue 91-95 participates in carbamoyl phosphate binding; that stretch reads STRTR. Ser-134 carries the phosphoserine modification. Arg-142 lines the carbamoyl phosphate pocket. Residue Arg-142 coordinates L-ornithine. Lys-145 is modified (N6-acetyllysine; alternate). Lys-145 is modified (N6-succinyllysine; alternate). Residue His-169 participates in carbamoyl phosphate binding. Residue Asn-200 participates in L-ornithine binding. An N6-acetyllysine; alternate mark is found at Lys-222, Lys-232, and Lys-239. Residues Lys-222, Lys-232, and Lys-239 each carry the N6-succinyllysine; alternate modification. Lys-244 carries the N6-acetyllysine modification. 264-268 is a binding site for L-ornithine; the sequence is DTWIS. An N6-succinyllysine mark is found at Lys-275 and Lys-290. Residue Lys-293 is modified to N6-acetyllysine; alternate. An N6-succinyllysine; alternate modification is found at Lys-293. L-ornithine is bound at residue 303 to 306; it reads HCLP. The active site involves Cys-304. The residue at position 308 (Lys-308) is an N6-acetyllysine; alternate. The residue at position 308 (Lys-308) is an N6-succinyllysine; alternate. Arg-331 serves as a coordination point for carbamoyl phosphate. Arg-331 is an L-ornithine binding site.

It belongs to the aspartate/ornithine carbamoyltransferase superfamily. OTCase family. As to quaternary structure, homotrimer. Post-translationally, acetylation at Lys-89 negatively regulates ornithine carbamoyltransferase activity in response to nutrient signals.

The protein localises to the mitochondrion matrix. The enzyme catalyses carbamoyl phosphate + L-ornithine = L-citrulline + phosphate + H(+). The protein operates within nitrogen metabolism; urea cycle; L-citrulline from L-ornithine and carbamoyl phosphate: step 1/1. With respect to regulation, negatively regulated by lysine acetylation. Catalyzes the second step of the urea cycle, the condensation of carbamoyl phosphate with L-ornithine to form L-citrulline. The urea cycle ensures the detoxification of ammonia by converting it to urea for excretion. The polypeptide is Ornithine transcarbamylase, mitochondrial (Ovis aries (Sheep)).